We begin with the raw amino-acid sequence, 61 residues long: Transcription elongation factor Spt4 (61 aa).

Zn(2+) contacts are provided by C6, C9, C18, and C21.

It belongs to the archaeal Spt4 family. Heterodimer composed of Spt4 and Spt5.

Its function is as follows. Stimulates transcription elongation. The protein is Transcription elongation factor Spt4 of Pyrococcus furiosus (strain ATCC 43587 / DSM 3638 / JCM 8422 / Vc1).